The primary structure comprises 259 residues: Methyltransferase afvD (259 aa).

This sequence belongs to the class I-like SAM-binding methyltransferase superfamily.

It functions in the pathway secondary metabolite biosynthesis. Functionally, methyltransferase; part of the gene cluster that mediates the biosynthesis of aflavarin, a bicoumarin that exhibits anti-insectan activity against the fungivorous beetle C.hemipterus. This is Methyltransferase afvD from Aspergillus flavus (strain ATCC 200026 / FGSC A1120 / IAM 13836 / NRRL 3357 / JCM 12722 / SRRC 167).